The sequence spans 116 residues: Tyrosine-protein phosphatase 10 (116 aa).

The Tyrosine-protein phosphatase domain occupies 1-116; that stretch reads WRMVWEQNVS…SPTGYGPIVV (116 aa). Asp-86 lines the substrate pocket.

It belongs to the protein-tyrosine phosphatase family.

The catalysed reaction is O-phospho-L-tyrosyl-[protein] + H2O = L-tyrosyl-[protein] + phosphate. In Styela plicata (Wrinkled sea squirt), this protein is Tyrosine-protein phosphatase 10 (STY-10).